A 443-amino-acid polypeptide reads, in one-letter code: Large ribosomal subunit protein mL50 (443 aa).

Residues 121–145 (QPTRADAPEKIRDPNYEPATSGAGL) are disordered. A compositionally biased stretch (basic and acidic residues) spans 126 to 135 (DAPEKIRDPN).

It belongs to the mitochondrion-specific ribosomal protein mL50 family. In terms of assembly, component of the mitochondrial large ribosomal subunit (mt-LSU). Mature N.crassa 74S mitochondrial ribosomes consist of a small (37S) and a large (54S) subunit. The 37S small subunit contains a 16S ribosomal RNA (16S mt-rRNA) and 32 different proteins. The 54S large subunit contains a 23S rRNA (23S mt-rRNA) and 42 different proteins.

The protein localises to the mitochondrion. In terms of biological role, component of the mitochondrial ribosome (mitoribosome), a dedicated translation machinery responsible for the synthesis of mitochondrial genome-encoded proteins, including at least some of the essential transmembrane subunits of the mitochondrial respiratory chain. The mitoribosomes are attached to the mitochondrial inner membrane and translation products are cotranslationally integrated into the membrane. This is Large ribosomal subunit protein mL50 (mrpl13) from Neurospora crassa (strain ATCC 24698 / 74-OR23-1A / CBS 708.71 / DSM 1257 / FGSC 987).